Here is a 122-residue protein sequence, read N- to C-terminus: Large ribosomal subunit protein uL14 (122 aa).

The protein belongs to the universal ribosomal protein uL14 family. As to quaternary structure, part of the 50S ribosomal subunit. Forms a cluster with proteins L3 and L19. In the 70S ribosome, L14 and L19 interact and together make contacts with the 16S rRNA in bridges B5 and B8.

In terms of biological role, binds to 23S rRNA. Forms part of two intersubunit bridges in the 70S ribosome. The chain is Large ribosomal subunit protein uL14 from Latilactobacillus sakei subsp. sakei (strain 23K) (Lactobacillus sakei subsp. sakei).